We begin with the raw amino-acid sequence, 160 residues long: Type IV major fimbrial protein FimA (160 aa).

A propeptide spans 1–7 (MKSLQKG) (leader sequence). The residue at position 8 (Phe8) is an N-methylphenylalanine. The helical transmembrane segment at 8–28 (FTLIELMIVVAIIGILAAFAI) threads the bilayer. An intrachain disulfide couples Cys63 to Cys105.

Belongs to the N-Me-Phe pilin family. The pili are polar flexible filaments of about 5.4 nanometers diameter and 2.5 micrometers average length; they consist of only a single polypeptide chain arranged in a helical configuration of five subunits per turn in the assembled pilus.

The protein resides in the fimbrium. It is found in the membrane. Functionally, major component of the type IV fimbriae that plays an essential role in twitching motility, natural transformation, and protease secretion. This is Type IV major fimbrial protein FimA (fimA) from Dichelobacter nodosus (Bacteroides nodosus).